Here is a 157-residue protein sequence, read N- to C-terminus: MSRRRGKVEPRKITPDPVYNDVQVAKFINCLMLSGKKSVAEQLFYDALEIIQKKTGNDPYTTFREALENAKPQVEVKSRRVGGVTYQVPVEVRPERRLALGIRWLIRYSRDRNEKGMAAKLAAEFIEAQKGTGSAIKKKEDIRKMAEANKAFSHYRW.

Belongs to the universal ribosomal protein uS7 family. As to quaternary structure, part of the 30S ribosomal subunit. Contacts proteins S9 and S11.

In terms of biological role, one of the primary rRNA binding proteins, it binds directly to 16S rRNA where it nucleates assembly of the head domain of the 30S subunit. Is located at the subunit interface close to the decoding center, probably blocks exit of the E-site tRNA. The protein is Small ribosomal subunit protein uS7 of Leptospira interrogans serogroup Icterohaemorrhagiae serovar copenhageni (strain Fiocruz L1-130).